Here is a 602-residue protein sequence, read N- to C-terminus: Probable translation initiation factor IF-2 (602 aa).

Residues 18 to 233 (LRTPIVCVMG…LVGLAQRFLK (216 aa)) form the tr-type G domain. The interval 27 to 34 (GHVDHGKT) is G1. 27 to 34 (GHVDHGKT) is a GTP binding site. The interval 52–56 (AITQH) is G2. The interval 88 to 91 (DTPG) is G3. Residues 88–92 (DTPGH) and 142–145 (NKID) contribute to the GTP site. The segment at 142–145 (NKID) is G4. The interval 210 to 212 (SAI) is G5.

Belongs to the TRAFAC class translation factor GTPase superfamily. Classic translation factor GTPase family. IF-2 subfamily.

In terms of biological role, function in general translation initiation by promoting the binding of the formylmethionine-tRNA to ribosomes. Seems to function along with eIF-2. The sequence is that of Probable translation initiation factor IF-2 from Methanothrix thermoacetophila (strain DSM 6194 / JCM 14653 / NBRC 101360 / PT) (Methanosaeta thermophila).